Here is an 828-residue protein sequence, read N- to C-terminus: Periplasmic nitrate reductase (828 aa).

Residues 1 to 31 (MKLSRRSFMKANAVAAAAAAAGLSVPGVARA) constitute a signal peptide (tat-type signal). Residues 39 to 95 (IKWDKAPCRFCGTGCGVLVGTQQGRVVACQGDPDAPVNRGLNCIKGYFLPKIMYGKD) enclose the 4Fe-4S Mo/W bis-MGD-type domain. Residues C46, C49, C53, and C81 each coordinate [4Fe-4S] cluster. Mo-bis(molybdopterin guanine dinucleotide)-binding positions include K83, Q150, N175, C179, 212-219 (WGSNMAEM), 243-247 (STFQH), 262-264 (QSD), M372, Q376, N482, 508-509 (SD), K531, D558, and 718-727 (TGRVLEHWHT). A substrate-binding site is contributed by F794. The Mo-bis(molybdopterin guanine dinucleotide) site is built by N802 and K819.

It belongs to the prokaryotic molybdopterin-containing oxidoreductase family. NasA/NapA/NarB subfamily. Component of the periplasmic nitrate reductase NapAB complex composed of NapA and NapB. [4Fe-4S] cluster is required as a cofactor. The cofactor is Mo-bis(molybdopterin guanine dinucleotide). Predicted to be exported by the Tat system. The position of the signal peptide cleavage has not been experimentally proven.

The protein localises to the periplasm. The catalysed reaction is 2 Fe(II)-[cytochrome] + nitrate + 2 H(+) = 2 Fe(III)-[cytochrome] + nitrite + H2O. Its function is as follows. Catalytic subunit of the periplasmic nitrate reductase complex NapAB. Receives electrons from NapB and catalyzes the reduction of nitrate to nitrite. The sequence is that of Periplasmic nitrate reductase from Salmonella paratyphi C (strain RKS4594).